The following is a 384-amino-acid chain: Methylthioribose-1-phosphate isomerase (384 aa).

The Proton donor role is filled by Asp255.

This sequence belongs to the eIF-2B alpha/beta/delta subunits family. MtnA subfamily.

The protein resides in the cytoplasm. The protein localises to the nucleus. It catalyses the reaction 5-(methylsulfanyl)-alpha-D-ribose 1-phosphate = 5-(methylsulfanyl)-D-ribulose 1-phosphate. It participates in amino-acid biosynthesis; L-methionine biosynthesis via salvage pathway; L-methionine from S-methyl-5-thio-alpha-D-ribose 1-phosphate: step 1/6. Its function is as follows. Catalyzes the interconversion of methylthioribose-1-phosphate (MTR-1-P) into methylthioribulose-1-phosphate (MTRu-1-P). This chain is Methylthioribose-1-phosphate isomerase (mri1), found in Talaromyces marneffei (strain ATCC 18224 / CBS 334.59 / QM 7333) (Penicillium marneffei).